The primary structure comprises 56 residues: Light-harvesting protein B-880 beta chain (56 aa).

Residues 1–22 (AEIDRPVSLSGLTEGEAREFHG) lie on the Cytoplasmic side of the membrane. 2 residues coordinate a bacteriochlorophyll: His21 and His39. A helical membrane pass occupies residues 23-45 (VFMTSFMVFIAVAIVAHILAWMW). The Periplasmic segment spans residues 46–56 (RPWIPGPEGYA).

Belongs to the antenna complex beta subunit family. The core complex is formed by different alpha and beta chains, binding bacteriochlorophyll molecules, and arranged most probably in tetrameric structures disposed around the reaction center. The non-pigmented gamma chains may constitute additional components.

The protein resides in the cell inner membrane. Antenna complexes are light-harvesting systems, which transfer the excitation energy to the reaction centers. In Afifella marina (Rhodobium marinum), this protein is Light-harvesting protein B-880 beta chain.